The chain runs to 416 residues: MYRHGISSQRSWPLWTTIFIFLGVAAILGVTIGLLVHFLAVEKTYYYQGDFHISGVTYNDNCENAASQASTNLSKDIETKMLNAFQNSSIYKEYVKSEVIKLLPNANGSNVQLQLKFKFPPAEGVSMRTKIKAKLHQMLKNNMASWNAVPASIKLMEISKAASEMLTNNCCGRQVANSIITGNKIVNGKSSLEGAWPWQASMQWKGRHYCGASLISSRWLLSAAHCFAKKNNSKDWTVNFGIVVNKPYMTRKVQNIIFHENYSSPGLHDDIALVQLAEEVSFTEYIRKICLPEAKMKLSENDNVVVTGWGTLYMNGSFPVILQEDFLKIIDNKICNASYAYSGFVTDTMLCAGFMSGEADACQNDSGGPLAYPDSRNIWHLVGIVSWGDGCGKKNKPGVYTRVTSYRNWITSKTGL.

Residues 1-17 (MYRHGISSQRSWPLWTT) lie on the Cytoplasmic side of the membrane. Residues 18–38 (IFIFLGVAAILGVTIGLLVHF) form a helical; Signal-anchor for type II membrane protein membrane-spanning segment. The Extracellular segment spans residues 39 to 416 (LAVEKTYYYQ…RNWITSKTGL (378 aa)). Positions 43-160 (KTYYYQGDFH…ASIKLMEISK (118 aa)) constitute an SEA domain. N-linked (GlcNAc...) asparagine glycosylation is found at asparagine 72 and asparagine 107. Positions 185-415 (IVNGKSSLEG…YRNWITSKTG (231 aa)) constitute a Peptidase S1 domain. Cysteine 210 and cysteine 226 are disulfide-bonded. Residues histidine 225 and aspartate 270 each act as charge relay system in the active site. Asparagine 315 carries N-linked (GlcNAc...) asparagine glycosylation. 2 disulfides stabilise this stretch: cysteine 335–cysteine 351 and cysteine 362–cysteine 391. Serine 366 acts as the Charge relay system in catalysis.

The protein belongs to the peptidase S1 family.

It is found in the cell membrane. Inhibited by aprotinin, leupeptin, benzamidine, SERPINA1, SPINT1 and SPINT2. Functionally, serine protease. This is Transmembrane protease serine 11B (TMPRSS11B) from Homo sapiens (Human).